Here is a 1828-residue protein sequence, read N- to C-terminus: Separin (1828 aa).

The Peptidase C50 domain maps to 1647–1741 (KEAGSYILNP…SGALYECGSF (95 aa)). The active site involves Cys-1730.

As to quaternary structure, interacts with cut2. Interacts with rad21.

Its subcellular location is the cytoplasm. It localises to the nucleus. It carries out the reaction All bonds known to be hydrolyzed by this endopeptidase have arginine in P1 and an acidic residue in P4. P6 is often occupied by an acidic residue or by a hydroxy-amino-acid residue, the phosphorylation of which enhances cleavage.. It is inactivated via its interaction with cut2, which probably covers its active site. Cut2 degradation at anaphase, liberates it and triggers rad21 cleavage. Caspase-like protease, which plays a central role in the chromosome segregation by cleaving the rad21 subunit of the cohesin complex at the onset of anaphase. During most of the cell cycle, it is inactivated by securin/cut2 protein. It is also required for pointed nuclear formation. This Schizosaccharomyces pombe (strain 972 / ATCC 24843) (Fission yeast) protein is Separin (cut1).